The sequence spans 320 residues: tRNA uridine(34) hydroxylase (320 aa).

One can recognise a Rhodanese domain in the interval 123–217 (EDEDTVILDA…YGKDPETKGQ (95 aa)). The Cysteine persulfide intermediate role is filled by Cys177.

The protein belongs to the TrhO family.

It carries out the reaction uridine(34) in tRNA + AH2 + O2 = 5-hydroxyuridine(34) in tRNA + A + H2O. Its function is as follows. Catalyzes oxygen-dependent 5-hydroxyuridine (ho5U) modification at position 34 in tRNAs. This chain is tRNA uridine(34) hydroxylase, found in Staphylococcus haemolyticus (strain JCSC1435).